Reading from the N-terminus, the 390-residue chain is Putative nickel insertion protein (390 aa).

This sequence belongs to the LarC family.

The chain is Putative nickel insertion protein from Geobacter metallireducens (strain ATCC 53774 / DSM 7210 / GS-15).